We begin with the raw amino-acid sequence, 247 residues long: Protein ABHD14A (247 aa).

The helical; Signal-anchor for type II membrane protein transmembrane segment at 11–31 threads the bilayer; that stretch reads AALLGLGLLLVFLLYMGLPGP. Asparagine 43 carries N-linked (GlcNAc...) asparagine glycosylation. Residues serine 147, aspartate 198, and histidine 225 each act as charge relay system in the active site.

It belongs to the AB hydrolase superfamily. ABHD14 family. In terms of tissue distribution, widely expressed. Higher expression is detected in brain, kidney, heart, testis, ovary and uterus.

The protein resides in the cytoplasm. It localises to the membrane. Its function is as follows. Possible role in granule neuron development. The sequence is that of Protein ABHD14A from Mus musculus (Mouse).